Consider the following 421-residue polypeptide: ATP-dependent RNA helicase RhlB (421 aa).

The Q motif motif lies at glutamine 9–alanine 37. A Helicase ATP-binding domain is found at leucine 40–valine 219. Alanine 53–threonine 60 contacts ATP. The short motif at aspartate 165 to aspartate 168 is the DEAD box element. One can recognise a Helicase C-terminal domain in the interval arginine 245–methionine 390. The interval proline 396–glycine 421 is disordered. The span at arginine 403–proline 414 shows a compositional bias: low complexity.

The protein belongs to the DEAD box helicase family. RhlB subfamily. Component of the RNA degradosome, which is a multiprotein complex involved in RNA processing and mRNA degradation.

It localises to the cytoplasm. It catalyses the reaction ATP + H2O = ADP + phosphate + H(+). Its function is as follows. DEAD-box RNA helicase involved in RNA degradation. Has RNA-dependent ATPase activity and unwinds double-stranded RNA. In Klebsiella pneumoniae (strain 342), this protein is ATP-dependent RNA helicase RhlB.